A 973-amino-acid chain; its full sequence is FHF complex subunit HOOK-interacting protein 1B (973 aa).

Disordered regions lie at residues 466 to 493 (SSPSRPEHASWARGPGSPSVDSSSVVTV), 510 to 547 (SLGGSESPAPAPRSPGLATSPASSPGRRPSPVEEPGEL), and 573 to 647 (SAPY…EGAK). Serine 467 is modified (phosphoserine). Positions 482 to 493 (SPSVDSSSVVTV) are enriched in low complexity. A phosphoserine mark is found at serine 510, serine 523, serine 529, and serine 533. 2 stretches are compositionally biased toward low complexity: residues 529 to 538 (SPASSPGRRP) and 622 to 639 (GARESLGHLPPPQLNGLP). A phosphoserine mark is found at serine 859 and serine 898.

This sequence belongs to the FHIP family. Component of the FTS/Hook/FHIP complex (FHF complex), composed of AKTIP/FTS, FHIP1B, and one or more members of the Hook family of proteins HOOK1, HOOK2, and HOOK3. The FHF complex associates with the homotypic vesicular sorting complex (the HOPS complex).

Functionally, component of the FTS/Hook/FHIP complex (FHF complex). The FHF complex may function to promote vesicle trafficking and/or fusion via the homotypic vesicular protein sorting complex (the HOPS complex). FHF complex promotes the distribution of AP-4 complex to the perinuclear area of the cell. The polypeptide is FHF complex subunit HOOK-interacting protein 1B (FHIP1B) (Bos taurus (Bovine)).